The primary structure comprises 496 residues: Glycerol kinase (496 aa).

ADP is bound at residue T12. T12, T13, and S14 together coordinate ATP. T12 provides a ligand contact to sn-glycerol 3-phosphate. Position 16 (R16) interacts with ADP. 3 residues coordinate sn-glycerol 3-phosphate: R82, E83, and Y134. Positions 82, 83, and 134 each coordinate glycerol. Residue H230 is modified to Phosphohistidine; by HPr. D244 is a binding site for sn-glycerol 3-phosphate. Residues D244 and Q245 each contribute to the glycerol site. Positions 266 and 309 each coordinate ADP. T266, G309, Q313, and G410 together coordinate ATP. 2 residues coordinate ADP: G410 and N414.

This sequence belongs to the FGGY kinase family. In terms of assembly, homotetramer and homodimer (in equilibrium). Post-translationally, the phosphoenolpyruvate-dependent sugar phosphotransferase system (PTS), including enzyme I, and histidine-containing protein (HPr) are required for the phosphorylation, which leads to the activation of the enzyme.

The catalysed reaction is glycerol + ATP = sn-glycerol 3-phosphate + ADP + H(+). Its pathway is polyol metabolism; glycerol degradation via glycerol kinase pathway; sn-glycerol 3-phosphate from glycerol: step 1/1. With respect to regulation, activated by phosphorylation and inhibited by fructose 1,6-bisphosphate (FBP). Key enzyme in the regulation of glycerol uptake and metabolism. Catalyzes the phosphorylation of glycerol to yield sn-glycerol 3-phosphate. This is Glycerol kinase from Bacillus thuringiensis (strain Al Hakam).